A 286-amino-acid chain; its full sequence is Pyridoxal kinase PdxY (286 aa).

Substrate-binding positions include Ser-9 and 44-45; that span reads TQ. Residues Asp-111, Glu-148, and Lys-181 each coordinate ATP. Residue Asp-222 participates in substrate binding.

It belongs to the pyridoxine kinase family. PdxY subfamily. In terms of assembly, homodimer. Requires Mg(2+) as cofactor.

It catalyses the reaction pyridoxal + ATP = pyridoxal 5'-phosphate + ADP + H(+). It functions in the pathway cofactor metabolism; pyridoxal 5'-phosphate salvage; pyridoxal 5'-phosphate from pyridoxal: step 1/1. Functionally, pyridoxal kinase involved in the salvage pathway of pyridoxal 5'-phosphate (PLP). Catalyzes the phosphorylation of pyridoxal to PLP. This is Pyridoxal kinase PdxY from Actinobacillus succinogenes (strain ATCC 55618 / DSM 22257 / CCUG 43843 / 130Z).